The chain runs to 615 residues: Hypermethylated in cancer 2 protein (615 aa).

Residues 46–109 (CDVIIMVENS…IYTGKLLPSD (64 aa)) enclose the BTB domain. The disordered stretch occupies residues 144-167 (KPFGSGRAGSTGMGRPPRSQRLST). 3 positions are modified to phosphoserine: serine 166, serine 169, and serine 197. Disordered stretches follow at residues 182-208 (RKGA…GSNQ) and 229-421 (GCSS…SGHA). Positions 246–250 (GLDLS) are binding to CtBP. The span at 280 to 296 (SPPAASAPPVANSASYS) shows a compositional bias: low complexity. A compositionally biased stretch (basic and acidic residues) spans 336-356 (KKEWGKKEPVAGSPFERREAG). At serine 348 the chain carries Phosphoserine. A compositionally biased stretch (low complexity) spans 379–388 (ASGAGPSGPY). Serine 412 bears the Phosphoserine mark. 5 C2H2-type zinc fingers span residues 442–469 (YVCI…EEEL), 505–532 (FKCS…LTRP), 533–560 (FPCN…GLKP), 561–588 (FACD…GEKP), and 589–615 (YECQ…TSPS).

Belongs to the krueppel C2H2-type zinc-finger protein family. Hic subfamily. In terms of assembly, self-associates. Interacts with HIC1. In terms of tissue distribution, highest levels in cerebellum.

The protein localises to the nucleus. Functionally, transcriptional repressor. This is Hypermethylated in cancer 2 protein (HIC2) from Homo sapiens (Human).